The sequence spans 435 residues: Enolase (435 aa).

Residue glutamine 163 participates in (2R)-2-phosphoglycerate binding. Glutamate 205 functions as the Proton donor in the catalytic mechanism. Residues aspartate 243, glutamate 292, and aspartate 319 each coordinate Mg(2+). Lysine 344, arginine 373, serine 374, and lysine 395 together coordinate (2R)-2-phosphoglycerate. The active-site Proton acceptor is the lysine 344.

The protein belongs to the enolase family. Requires Mg(2+) as cofactor.

The protein resides in the cytoplasm. It is found in the secreted. It localises to the cell surface. It carries out the reaction (2R)-2-phosphoglycerate = phosphoenolpyruvate + H2O. It functions in the pathway carbohydrate degradation; glycolysis; pyruvate from D-glyceraldehyde 3-phosphate: step 4/5. Catalyzes the reversible conversion of 2-phosphoglycerate (2-PG) into phosphoenolpyruvate (PEP). It is essential for the degradation of carbohydrates via glycolysis. This Streptococcus suis (strain 98HAH33) protein is Enolase.